The primary structure comprises 179 residues: Alpha-tubulin N-acetyltransferase (179 aa).

In terms of domain architecture, N-acetyltransferase spans 1–175 (MRVEVVRAPG…NRFVVFDAYF (175 aa)). Acetyl-CoA is bound by residues 109-122 (FYVDEVWQRRGVGL) and 145-154 (SPKLFAFLKK).

The protein belongs to the acetyltransferase ATAT1 family.

It catalyses the reaction L-lysyl-[alpha-tubulin] + acetyl-CoA = N(6)-acetyl-L-lysyl-[alpha-tubulin] + CoA + H(+). In terms of biological role, specifically acetylates 'Lys-40' in alpha-tubulin on the lumenal side of microtubules. Promotes microtubule destabilization and accelerates microtubule dynamics; this activity may be independent of acetylation activity. Acetylates alpha-tubulin with a slow enzymatic rate, due to a catalytic site that is not optimized for acetyl transfer. Enters the microtubule through each end and diffuses quickly throughout the lumen of microtubules. Acetylates only long/old microtubules because of its slow acetylation rate since it does not have time to act on dynamically unstable microtubules before the enzyme is released. This Phytophthora infestans (strain T30-4) (Potato late blight agent) protein is Alpha-tubulin N-acetyltransferase.